A 193-amino-acid polypeptide reads, in one-letter code: Dual-action ribosomal maturation protein DarP (193 aa).

Basic and acidic residues predominate over residues 1 to 10 (MRGRDEDTGE). Disordered stretches follow at residues 1-20 (MRGRDEDTGEFRGASRSQQR) and 171-193 (QEQGLESGDSGLEDGESALEDDE). Acidic residues predominate over residues 181-193 (GLEDGESALEDDE).

The protein belongs to the DarP family.

Its subcellular location is the cytoplasm. Functionally, member of a network of 50S ribosomal subunit biogenesis factors which assembles along the 30S-50S interface, preventing incorrect 23S rRNA structures from forming. Promotes peptidyl transferase center (PTC) maturation. The sequence is that of Dual-action ribosomal maturation protein DarP from Xanthomonas oryzae pv. oryzae (strain MAFF 311018).